Consider the following 472-residue polypeptide: MAGGVTGGAAGTWSDRFEQGLHPFIEAFNASIGFDLTLLQEDLDGSIAHARMLASVGVITEAEAEQLVEGLETVRAEAASGSFQPGLADEDVHFAVERRLIALLGPVGKKLHTGRSRNDQVGTDLRLWLRRRLDGLDQDLQRLQGALLTQADRHRRTMIPGYTHLQRAQPLCLAHHLLAYVEMLERDRERLQDARKRVNICPLGAAALAGTPVPIDRQRTAKELGFSAVYANSLDAVSDRDFCVEFSAAASLVMVHLSRLAEEVIAWASEEFGFVRLSDRCATGSSLMPQKKNPDVPELVRGKTGRVFGHLQGLLTMIKGLPLAYNKDFQEDKEALFDAFRTTRDCVEAMAILFEEGLDFRVERLNEAVEQDFSNATDVADYLVSRGVPFREAYQLVGAVVRRCLEQGCLLRDLDLSAWKELHPAFEADLHDALAPRAVVAARRSEGGTGFERVDEQLQRWLQRFNGTQPVG.

Belongs to the lyase 1 family. Argininosuccinate lyase subfamily.

The protein resides in the cytoplasm. The enzyme catalyses 2-(N(omega)-L-arginino)succinate = fumarate + L-arginine. It participates in amino-acid biosynthesis; L-arginine biosynthesis; L-arginine from L-ornithine and carbamoyl phosphate: step 3/3. This Synechococcus sp. (strain CC9605) protein is Argininosuccinate lyase.